Reading from the N-terminus, the 317-residue chain is MPKTIAFKHDTVLLHETVDMLEVKPNGIYVDATLGGAGHSEYLLSKLTTGHLYSFDQDETAHANAKVRLSEQLAEDKVTLIKSNFRNLKSALAELDITKIDGILYDLGVSSPQFDDSQRGFSYKKEARLDMRMDQSQTLSAYEVVNDYPYEALVRIFFRYGEDKFSKQIARKIEQSRKIKPIETTIELADLIKSALPQKELKKKGHPAKRIFQAIRIEVNDELGAAEESIEQAIDLLKVDGRISVITFHSLEDRLTKSIFKEYSTVNVPKGLPMLPKEMEAKLKLINRKPVLASEEELEFNNRAHSAKLRVAQKQRD.

S-adenosyl-L-methionine contacts are provided by residues 37 to 39 (AGH), Asp-56, Phe-85, Asp-106, and Gln-113.

This sequence belongs to the methyltransferase superfamily. RsmH family.

The protein localises to the cytoplasm. It catalyses the reaction cytidine(1402) in 16S rRNA + S-adenosyl-L-methionine = N(4)-methylcytidine(1402) in 16S rRNA + S-adenosyl-L-homocysteine + H(+). In terms of biological role, specifically methylates the N4 position of cytidine in position 1402 (C1402) of 16S rRNA. The protein is Ribosomal RNA small subunit methyltransferase H of Lactococcus lactis subsp. cremoris (strain SK11).